The sequence spans 314 residues: Hydroxyethylthiazole kinase (314 aa).

A substrate-binding site is contributed by methionine 70. ATP is bound by residues arginine 145 and serine 217. Position 244 (glycine 244) interacts with substrate.

The protein belongs to the Thz kinase family. It depends on Mg(2+) as a cofactor.

It catalyses the reaction 5-(2-hydroxyethyl)-4-methylthiazole + ATP = 4-methyl-5-(2-phosphooxyethyl)-thiazole + ADP + H(+). Its pathway is cofactor biosynthesis; thiamine diphosphate biosynthesis; 4-methyl-5-(2-phosphoethyl)-thiazole from 5-(2-hydroxyethyl)-4-methylthiazole: step 1/1. Functionally, catalyzes the phosphorylation of the hydroxyl group of 4-methyl-5-beta-hydroxyethylthiazole (THZ). This chain is Hydroxyethylthiazole kinase, found in Bifidobacterium longum (strain NCC 2705).